A 58-amino-acid polypeptide reads, in one-letter code: Pepsin-1 (58 aa).

Positions 1-41 (LLQVPLEKGQSAREYLQEQGLWEQYRLKYPYNPMAKFDPSF) are cleaved as a propeptide — activation peptide.

This sequence belongs to the peptidase A1 family.

The sequence is that of Pepsin-1 from Thunnus orientalis (North Pacific bluefin tuna).